Here is an 876-residue protein sequence, read N- to C-terminus: Monofunctional isopimaradiene synthase, chloroplastic (876 aa).

Residues 1 to 64 (MAMPSYSSLS…YLRLGSRKII (64 aa)) constitute a chloroplast transit peptide. Residues D628, D632, N772, T776, and E780 each contribute to the Mg(2+) site. Residues 628-632 (DDLYD) carry the DDXXD motif motif.

The protein belongs to the terpene synthase family. Tpsd subfamily. The cofactor is Mg(2+).

It is found in the plastid. The protein localises to the chloroplast. The catalysed reaction is (+)-copalyl diphosphate = isopimara-7,15-diene + diphosphate. It participates in terpene metabolism; oleoresin biosynthesis. Involved in defensive oleoresin formation in conifers in response to insect attack or other injury. Involved in diterpene (C20) olefins biosynthesis. Monofunctional enzyme lacking the DXDD motif in the class II active site relevant for the cyclization of geranylgeranyl diphosphate (GGPP). Requires (+)-copalyl diphosphate ((+)-CPP) as substrate, but no activity with GGPP or ent-CPP. Isopimaradiene is the major products of the enzyme followed by sandaracopimaradiene. In Pinus banksiana (Jack pine), this protein is Monofunctional isopimaradiene synthase, chloroplastic.